The sequence spans 285 residues: Hydroxyethylthiazole kinase 1 (285 aa).

Methionine 48 is a binding site for substrate. 2 residues coordinate ATP: arginine 124 and serine 183. Position 210 (glycine 210) interacts with substrate.

It belongs to the Thz kinase family. Requires Mg(2+) as cofactor.

The enzyme catalyses 5-(2-hydroxyethyl)-4-methylthiazole + ATP = 4-methyl-5-(2-phosphooxyethyl)-thiazole + ADP + H(+). It functions in the pathway cofactor biosynthesis; thiamine diphosphate biosynthesis; 4-methyl-5-(2-phosphoethyl)-thiazole from 5-(2-hydroxyethyl)-4-methylthiazole: step 1/1. Its function is as follows. Catalyzes the phosphorylation of the hydroxyl group of 4-methyl-5-beta-hydroxyethylthiazole (THZ). This chain is Hydroxyethylthiazole kinase 1, found in Methanosphaera stadtmanae (strain ATCC 43021 / DSM 3091 / JCM 11832 / MCB-3).